Here is a 335-residue protein sequence, read N- to C-terminus: Taste receptor type 2 member 119 (335 aa).

The Extracellular segment spans residues methionine 1–leucine 7. Residues phenylalanine 8–valine 28 form a helical membrane-spanning segment. Topologically, residues valine 29–proline 43 are cytoplasmic. Residues leucine 44 to phenylalanine 64 form a helical membrane-spanning segment. The Extracellular segment spans residues alanine 65–asparagine 81. N-linked (GlcNAc...) asparagine glycosylation occurs at asparagine 81. Residues valine 82–phenylalanine 102 form a helical membrane-spanning segment. The Cytoplasmic segment spans residues tyrosine 103–arginine 124. Residues leucine 125–serine 145 traverse the membrane as a helical segment. Over arginine 146–serine 176 the chain is Extracellular. Asparagine 163 carries N-linked (GlcNAc...) asparagine glycosylation. Residues valine 177 to leucine 197 form a helical membrane-spanning segment. Residues serine 198–alanine 224 lie on the Cytoplasmic side of the membrane. A helical membrane pass occupies residues methionine 225–isoleucine 245. At cysteine 246 to threonine 256 the chain is on the extracellular side. The helical transmembrane segment at phenylalanine 257–leucine 277 threads the bilayer. At glycine 278–serine 335 the chain is on the cytoplasmic side.

This sequence belongs to the G-protein coupled receptor T2R family. Expressed in subsets of taste receptor cells of the tongue and palate epithelium and exclusively in gustducin-positive cells. Expressed in 15% taste bud cells in circumvallate and foliate papillae but only in 2% in fungiform papillae. Expressed in the gastro and duodenal tissue. Not expressed in colon, liver, heart and kidney.

It localises to the membrane. In terms of biological role, gustducin-coupled receptor implicated in the perception of bitter compounds in the oral cavity and the gastrointestinal tract. Signals through PLCB2 and the calcium-regulated cation channel TRPM5. The chain is Taste receptor type 2 member 119 (Tas2r119) from Mus musculus (Mouse).